A 509-amino-acid chain; its full sequence is Meiotic fizzy-related protein 2 (509 aa).

WD repeat units lie at residues 159 to 196 (LDDF…SIME), 199 to 238 (PTTY…NRCD), 242 to 281 (HHDG…MRRV), 287 to 326 (VHQE…NKKF), 329 to 371 (IHLA…RIHS), and 437 to 477 (IHTH…QEIH).

This sequence belongs to the WD repeat CDC20/Fizzy family.

It is found in the nucleus. Has a role in meiosis. This is Meiotic fizzy-related protein 2 (mfr2) from Schizosaccharomyces pombe (strain 972 / ATCC 24843) (Fission yeast).